The following is a 141-amino-acid chain: Putative pre-16S rRNA nuclease (141 aa).

This sequence belongs to the YqgF nuclease family.

The protein localises to the cytoplasm. Its function is as follows. Could be a nuclease involved in processing of the 5'-end of pre-16S rRNA. The chain is Putative pre-16S rRNA nuclease from Cupriavidus taiwanensis (strain DSM 17343 / BCRC 17206 / CCUG 44338 / CIP 107171 / LMG 19424 / R1) (Ralstonia taiwanensis (strain LMG 19424)).